The sequence spans 141 residues: 16 kDa protein (141 aa).

The disordered stretch occupies residues 95 to 116 (ESSSATRKKSHNSKNSKKKFKE). Over residues 100 to 113 (TRKKSHNSKNSKKK) the composition is skewed to basic residues.

In Tobacco rattle virus (strain PSG), this protein is 16 kDa protein.